A 286-amino-acid polypeptide reads, in one-letter code: MTQLSLKKIYSGKVRDLYEIDDKRMLMVATDRLSAFDVILDDPIDRKGEILTQISNFWFKKLAHIMPNHFTGETVYDVLPQAEADLVKDRAVVCKRLTPIKIESIVRGYLTGSGLKDYKATGTICGLKLPEGLVEASKLPEPIFTPSSKAKVGDHDINISYEECEQLIGVELAKQVREKAISLYKEAAEYALTKGIIICDTKFEFGLDENGVLTLMDEVLTPDSSRFWSVETYQEGTNPPSFDKQFVRDWLEKSGWNKQAPAPKVPADVIQKTVDKYKEVLDLLTK.

The protein belongs to the SAICAR synthetase family.

The catalysed reaction is 5-amino-1-(5-phospho-D-ribosyl)imidazole-4-carboxylate + L-aspartate + ATP = (2S)-2-[5-amino-1-(5-phospho-beta-D-ribosyl)imidazole-4-carboxamido]succinate + ADP + phosphate + 2 H(+). It functions in the pathway purine metabolism; IMP biosynthesis via de novo pathway; 5-amino-1-(5-phospho-D-ribosyl)imidazole-4-carboxamide from 5-amino-1-(5-phospho-D-ribosyl)imidazole-4-carboxylate: step 1/2. This is Phosphoribosylaminoimidazole-succinocarboxamide synthase from Histophilus somni (strain 2336) (Haemophilus somnus).